A 617-amino-acid polypeptide reads, in one-letter code: Probable Xaa-Pro aminopeptidase P (617 aa).

Residues D414, D425, E523, and E537 each coordinate Mn(2+).

Belongs to the peptidase M24B family. Mn(2+) is required as a cofactor.

It carries out the reaction Release of any N-terminal amino acid, including proline, that is linked to proline, even from a dipeptide or tripeptide.. Functionally, catalyzes the removal of a penultimate prolyl residue from the N-termini of peptides. The polypeptide is Probable Xaa-Pro aminopeptidase P (AMPP) (Ajellomyces capsulatus (strain G186AR / H82 / ATCC MYA-2454 / RMSCC 2432) (Darling's disease fungus)).